The following is a 620-amino-acid chain: Membralin (620 aa).

The segment at 1–33 (MSEHVEPAAPGPGPNGGGGGPAPARGPRTPNLN) is disordered. S2 is subject to N-acetylserine. Low complexity predominate over residues 22–31 (APARGPRTPN). At T29 the chain carries Phosphothreonine. The helical transmembrane segment at 70-90 (FFVLLKALFVLFVLAYIHIVF) threads the bilayer. N-linked (GlcNAc...) asparagine glycosylation is present at N189. Helical transmembrane passes span 302-322 (TSYL…SMLL), 346-366 (IAFP…MEAI), and 426-446 (YSSL…IYFF). Disordered regions lie at residues 474–517 (TPTA…GPVA) and 568–620 (SPLG…EVGS). Composition is skewed to low complexity over residues 499-517 (PPAL…GPVA) and 568-593 (SPLG…AASD).

Belongs to the membralin family. Interacts with ERLIN2.

It localises to the endoplasmic reticulum membrane. May have a role in the ERAD pathway required for clearance of misfolded proteins in the endoplasmic reticulum (ER). Promotes survival of motor neurons, probably by protecting against ER stress. This is Membralin (TMEM259) from Homo sapiens (Human).